The chain runs to 1567 residues: Putative DEAH-box ATP-dependent helicase UM11114 (1567 aa).

Disordered stretches follow at residues 1–95 (MAPR…PGSK) and 670–734 (ESSV…ETRR). Polar residues predominate over residues 10 to 20 (IKSSGTTSSKA). 2 stretches are compositionally biased toward low complexity: residues 39–48 (TKAAKQQQTQ) and 55–73 (AISA…AASS). Residues 74 to 83 (AGGGGGGGQG) show a composition bias toward gly residues. Composition is skewed to polar residues over residues 670-687 (ESSV…TPTG) and 713-726 (LQRQ…SPSY). In terms of domain architecture, Helicase ATP-binding spans 746–924 (LGLIRSNRVV…FGKAPCISIP (179 aa)). 759–766 (GETGCGKT) lines the ATP pocket. The DEAH box signature appears at 871-874 (DEVH). A Helicase C-terminal domain is found at 1003–1184 (VVRYVVERAE…SLFLEVKSMR (182 aa)).

This sequence belongs to the DEAD box helicase family. DEAH subfamily.

In Mycosarcoma maydis (Corn smut fungus), this protein is Putative DEAH-box ATP-dependent helicase UM11114.